The primary structure comprises 434 residues: Glutamate/glutamine/aspartate/asparagine transport system permease protein BztC (434 aa).

The next 10 membrane-spanning stretches (helical) occupy residues 41 to 61 (LTVFGLLATVWLVQAAAPWLL), 113 to 133 (LFVTFAGLFLALAPVLFDALP), 135 to 155 (KLIWGTLLYPLAAFWLLWGGP), 156 to 176 (IWGPVSVLAGFAILGLLFTAL), 180 to 200 (LGVPVSAGIGLVVAALFWLYA), 227 to 247 (FLLALVIGVTAIVVSLPLGIL), 272 to 292 (GVPLITLLFTASLLLQYFLPP), 298 to 318 (LILRVVILVTLFAAAYIAEVI), 360 to 380 (IVSSFIGLFKDTTLVAFVGLF), and 398 to 418 (GTYWEPYIFVALIFFLFNFSM). The 196-residue stretch at 227–422 (FLLALVIGVT…LFNFSMSRYS (196 aa)) folds into the ABC transmembrane type-1 domain.

Belongs to the binding-protein-dependent transport system permease family. HisMQ subfamily. In terms of assembly, bztB and BztC form a heterodimer which can form a membrane complex with a homodimer of BztD.

Its subcellular location is the cell inner membrane. Its function is as follows. Part of a binding-protein-dependent transport system for glutamate, glutamine, aspartate and asparagine. Probably responsible for the translocation of the substrate across the membrane. In Rhodobacter capsulatus (strain ATCC BAA-309 / NBRC 16581 / SB1003), this protein is Glutamate/glutamine/aspartate/asparagine transport system permease protein BztC (bztC).